Reading from the N-terminus, the 151-residue chain is Nucleoside diphosphate kinase (151 aa).

ATP is bound by residues Lys11, Phe59, Arg87, Thr93, Arg104, and Asn114. Catalysis depends on His117, which acts as the Pros-phosphohistidine intermediate.

Belongs to the NDK family. In terms of assembly, homotetramer. The cofactor is Mg(2+).

The protein localises to the cytoplasm. It catalyses the reaction a 2'-deoxyribonucleoside 5'-diphosphate + ATP = a 2'-deoxyribonucleoside 5'-triphosphate + ADP. It carries out the reaction a ribonucleoside 5'-diphosphate + ATP = a ribonucleoside 5'-triphosphate + ADP. Major role in the synthesis of nucleoside triphosphates other than ATP. The ATP gamma phosphate is transferred to the NDP beta phosphate via a ping-pong mechanism, using a phosphorylated active-site intermediate. In Prochlorococcus marinus (strain NATL2A), this protein is Nucleoside diphosphate kinase.